Consider the following 173-residue polypeptide: NADH-ubiquinone oxidoreductase chain 6 (173 aa).

The next 5 helical transmembrane spans lie at 1 to 21 (MTYL…AVAS), 24 to 44 (APYF…GVLV), 53 to 73 (LVLF…SAAL), 86 to 106 (SVVG…GVFW), and 139 to 159 (YGGG…FVVL).

Belongs to the complex I subunit 6 family.

The protein localises to the mitochondrion membrane. The enzyme catalyses a ubiquinone + NADH + 5 H(+)(in) = a ubiquinol + NAD(+) + 4 H(+)(out). Its function is as follows. Core subunit of the mitochondrial membrane respiratory chain NADH dehydrogenase (Complex I) that is believed to belong to the minimal assembly required for catalysis. Complex I functions in the transfer of electrons from NADH to the respiratory chain. The immediate electron acceptor for the enzyme is believed to be ubiquinone. The polypeptide is NADH-ubiquinone oxidoreductase chain 6 (MT-ND6) (Formosania lacustris (Oriental stream loach)).